The sequence spans 85 residues: MASALSPGSRVLIALIRVYQRLISPLLGPHCRFTPTCSSYGIEALRRFGVIKGSWLTVKRVLKCHPLHPGGDDPVPPGPFDTREH.

It belongs to the UPF0161 family.

It localises to the cell membrane. Its function is as follows. Could be involved in insertion of integral membrane proteins into the membrane. Lyses fish blood cells. The chain is Putative membrane protein insertion efficiency factor (hlyA) from Aeromonas hydrophila.